The primary structure comprises 660 residues: tRNA 5-methylaminomethyl-2-thiouridine biosynthesis bifunctional protein MnmC (660 aa).

The segment at 1-235 (MTITRHARID…KWEVLRGAFI (235 aa)) is tRNA (mnm(5)s(2)U34)-methyltransferase. The FAD-dependent cmnm(5)s(2)U34 oxidoreductase stretch occupies residues 266-660 (IGAGLAGCAT…LRGLIRGGGK (395 aa)).

The protein in the N-terminal section; belongs to the methyltransferase superfamily. tRNA (mnm(5)s(2)U34)-methyltransferase family. In the C-terminal section; belongs to the DAO family. It depends on FAD as a cofactor.

The protein localises to the cytoplasm. The enzyme catalyses 5-aminomethyl-2-thiouridine(34) in tRNA + S-adenosyl-L-methionine = 5-methylaminomethyl-2-thiouridine(34) in tRNA + S-adenosyl-L-homocysteine + H(+). Its function is as follows. Catalyzes the last two steps in the biosynthesis of 5-methylaminomethyl-2-thiouridine (mnm(5)s(2)U) at the wobble position (U34) in tRNA. Catalyzes the FAD-dependent demodification of cmnm(5)s(2)U34 to nm(5)s(2)U34, followed by the transfer of a methyl group from S-adenosyl-L-methionine to nm(5)s(2)U34, to form mnm(5)s(2)U34. The polypeptide is tRNA 5-methylaminomethyl-2-thiouridine biosynthesis bifunctional protein MnmC (Pseudomonas syringae pv. tomato (strain ATCC BAA-871 / DC3000)).